Here is an 872-residue protein sequence, read N- to C-terminus: Alanine--tRNA ligase (872 aa).

Positions 567, 571, 669, and 673 each coordinate Zn(2+).

It belongs to the class-II aminoacyl-tRNA synthetase family. Requires Zn(2+) as cofactor.

It is found in the cytoplasm. It catalyses the reaction tRNA(Ala) + L-alanine + ATP = L-alanyl-tRNA(Ala) + AMP + diphosphate. Functionally, catalyzes the attachment of alanine to tRNA(Ala) in a two-step reaction: alanine is first activated by ATP to form Ala-AMP and then transferred to the acceptor end of tRNA(Ala). Also edits incorrectly charged Ser-tRNA(Ala) and Gly-tRNA(Ala) via its editing domain. This is Alanine--tRNA ligase from Streptococcus pyogenes serotype M6 (strain ATCC BAA-946 / MGAS10394).